Consider the following 255-residue polypeptide: ParA family protein TC_0871 (255 aa).

The protein belongs to the ParA family.

In Chlamydia muridarum (strain MoPn / Nigg), this protein is ParA family protein TC_0871.